Consider the following 227-residue polypeptide: MTIKQLHESDRPREKMIRLGARCLTDAELLAILIGSGNDRQTAIQLAQEILAKMDNSLPRLAKCDIQELTGSFRGMGPAKAVTVMAAMELSRRIPSQEMPRRESITDSRMAYRTISPFLTDLPQEEMWVLLLNQSGKIISMENLSRGGVSETSADVRLIMHKAVSHLASAIILAHNHPSGTVRPSEQDIQLTQRVQKAATLLGFRLNDHLIIGDDGAYFSFADEGLL.

The 124-residue stretch at 104–227 folds into the MPN domain; that stretch reads SITDSRMAYR…YFSFADEGLL (124 aa). Residues histidine 175, histidine 177, and aspartate 188 each coordinate Zn(2+). The JAMM motif motif lies at 175–188; that stretch reads HNHPSGTVRPSEQD.

The protein belongs to the UPF0758 family.

This chain is UPF0758 protein PG_0894, found in Porphyromonas gingivalis (strain ATCC BAA-308 / W83).